A 360-amino-acid chain; its full sequence is DNA replication and repair protein RecF (360 aa).

An ATP-binding site is contributed by 30–37 (GANGSGKT).

It belongs to the RecF family.

Its subcellular location is the cytoplasm. Its function is as follows. The RecF protein is involved in DNA metabolism; it is required for DNA replication and normal SOS inducibility. RecF binds preferentially to single-stranded, linear DNA. It also seems to bind ATP. The polypeptide is DNA replication and repair protein RecF (Acinetobacter baumannii (strain AB307-0294)).